Consider the following 426-residue polypeptide: Serine--tRNA ligase (426 aa).

233–235 (TAE) contributes to the L-serine binding site. ATP is bound at residue 264–266 (RRE). An L-serine-binding site is contributed by Glu287. An ATP-binding site is contributed by 351–354 (EISS). Ser386 contacts L-serine.

The protein belongs to the class-II aminoacyl-tRNA synthetase family. Type-1 seryl-tRNA synthetase subfamily. As to quaternary structure, homodimer. The tRNA molecule binds across the dimer.

The protein localises to the cytoplasm. The catalysed reaction is tRNA(Ser) + L-serine + ATP = L-seryl-tRNA(Ser) + AMP + diphosphate + H(+). It carries out the reaction tRNA(Sec) + L-serine + ATP = L-seryl-tRNA(Sec) + AMP + diphosphate + H(+). The protein operates within aminoacyl-tRNA biosynthesis; selenocysteinyl-tRNA(Sec) biosynthesis; L-seryl-tRNA(Sec) from L-serine and tRNA(Sec): step 1/1. Catalyzes the attachment of serine to tRNA(Ser). Is also able to aminoacylate tRNA(Sec) with serine, to form the misacylated tRNA L-seryl-tRNA(Sec), which will be further converted into selenocysteinyl-tRNA(Sec). The protein is Serine--tRNA ligase of Thermosipho africanus (strain TCF52B).